The sequence spans 439 residues: Xylose isomerase (439 aa).

Catalysis depends on residues histidine 101 and aspartate 104. Glutamate 232, glutamate 268, histidine 271, aspartate 296, aspartate 307, aspartate 309, and aspartate 339 together coordinate Mg(2+).

It belongs to the xylose isomerase family. As to quaternary structure, homotetramer. Mg(2+) is required as a cofactor.

The protein localises to the cytoplasm. The catalysed reaction is alpha-D-xylose = alpha-D-xylulofuranose. This chain is Xylose isomerase (xylA), found in Thermoanaerobacterium saccharolyticum.